The following is a 152-amino-acid chain: Small integral membrane protein 28 (152 aa).

The helical transmembrane segment at 52–72 (FLCILLPATILLFLAFLLLFL) threads the bilayer. Residues 117 to 152 (PLPPEATLPSQCLPPSYEEATRNPPGEEAQGCSPSV) form a disordered region.

The protein localises to the membrane. The protein is Small integral membrane protein 28 of Homo sapiens (Human).